The chain runs to 463 residues: Probable ECA polymerase (463 aa).

The next 11 helical transmembrane spans lie at 6–26 (FGGL…LTWM), 39–59 (FSLL…VLVF), 65–85 (VVPV…YAVY), 112–132 (ANLT…IFFL), 154–174 (GVAL…VYFL), 180–200 (AWLL…VIVG), 201–221 (GTRA…IVRG), 222–242 (WITL…MFWL), 340–360 (LVVM…GLVI), 377–397 (YKAA…IVLT), and 408–428 (VVFF…LYWL).

It belongs to the WzyE family. In terms of assembly, probably part of a complex composed of WzxE, WzyE and WzzE.

It is found in the cell inner membrane. The protein operates within bacterial outer membrane biogenesis; enterobacterial common antigen biosynthesis. Functionally, probably involved in the polymerization of enterobacterial common antigen (ECA) trisaccharide repeat units. The polypeptide is Probable ECA polymerase (Pectobacterium atrosepticum (strain SCRI 1043 / ATCC BAA-672) (Erwinia carotovora subsp. atroseptica)).